A 197-amino-acid chain; its full sequence is RING-H2 finger protein ATL80 (197 aa).

A helical membrane pass occupies residues 30–50 (LVVILAALLCALICVLGLIAV). The RING-type; atypical zinc finger occupies 111–153 (CAICLAEFSAGDELRVLPQCGHGFHVACIDTWLGSHSSCPSCR). Residues 168 to 197 (PGSSSSGLESEPEIEIRIKQGEDDPNSFLP) form a disordered region.

Belongs to the RING-type zinc finger family. ATL subfamily.

The protein resides in the membrane. The enzyme catalyses S-ubiquitinyl-[E2 ubiquitin-conjugating enzyme]-L-cysteine + [acceptor protein]-L-lysine = [E2 ubiquitin-conjugating enzyme]-L-cysteine + N(6)-ubiquitinyl-[acceptor protein]-L-lysine.. The protein operates within protein modification; protein ubiquitination. Its function is as follows. May be involved in the early steps of the plant defense signaling pathway. The polypeptide is RING-H2 finger protein ATL80 (ATL80) (Arabidopsis thaliana (Mouse-ear cress)).